The primary structure comprises 316 residues: MTKFKLKIASRRSKLAMVQTLWVKEQLEKNIPDLEVSIEAMATQGDKILDVALAKIGDKGLFTKELEAQMLVGHADIAVHSLKDLPTNLPDGLTLGCITKREDPSDALVVNKKNKIYQLESLPPGSIVGTSSLRRLAQLRYKFPHLDFKDIRGNVITRIEKLDSGEFDCIILAAAGLKRLGFESRVHQIIPNEISLHAVGQGALGIECKSDDKEVLKIISVLEDKVSSQRCLAERSFLRELEGGCQVPIGVNSSIQNDEIALIGMVASIDGKRLIKNESIGNIKYPEEVGKKLAEKLKLQGADKILSEIFEQFRDK.

Cys245 is subject to S-(dipyrrolylmethanemethyl)cysteine.

Belongs to the HMBS family. In terms of assembly, monomer. Requires dipyrromethane as cofactor.

It catalyses the reaction 4 porphobilinogen + H2O = hydroxymethylbilane + 4 NH4(+). The protein operates within porphyrin-containing compound metabolism; protoporphyrin-IX biosynthesis; coproporphyrinogen-III from 5-aminolevulinate: step 2/4. It functions in the pathway porphyrin-containing compound metabolism; chlorophyll biosynthesis. Tetrapolymerization of the monopyrrole PBG into the hydroxymethylbilane pre-uroporphyrinogen in several discrete steps. This chain is Porphobilinogen deaminase, found in Prochlorococcus marinus subsp. pastoris (strain CCMP1986 / NIES-2087 / MED4).